Consider the following 101-residue polypeptide: Small ribosomal subunit protein uS14 (101 aa).

This sequence belongs to the universal ribosomal protein uS14 family. Part of the 30S ribosomal subunit. Contacts proteins S3 and S10.

Binds 16S rRNA, required for the assembly of 30S particles and may also be responsible for determining the conformation of the 16S rRNA at the A site. In Paraburkholderia phymatum (strain DSM 17167 / CIP 108236 / LMG 21445 / STM815) (Burkholderia phymatum), this protein is Small ribosomal subunit protein uS14.